The sequence spans 715 residues: MKLLKKPAGLKKRKVISKRIKIEKKPSSEDEGSSDEEVPKLDGEGSLDGSEDEDDGTVTVEKGGVKKHKLDLEKLKQSDPEFFKFLQQEDADLLNMEDDGDDDEDDDEDDEDEEEEESDDDEDDEEDDDKTKIKKIRKPKIKSDNSGRLIVDSNVYSYLQQVLVLDDETSTPTNPSDVRMAVDVFVACVARVGADIEAPKYVINEQSIFEAVVRMCFQAMPDILKRLLKAKPEGDKVLFSKTAIKKYQTYVRTYLHAMIVFLNEVQTTEVLIATIKAMTRLVDLYAHFSRMSKLLIKAVVRIWSRKTLECRLPAFVCMNLLVKNYPQHFVPLYKTAYVAFVANSKIVTNETWPLLQFMHRTFAELTILNPEQAYKYAFVYIRQTAVHLRNAMISKGRKDLIFSIYNWQMMQCMYMWVRVIAKAHSVNGAEQIGELVYPLIQVIVGIFKLCNAPTFLPLRLHCCQLLIQLQASCTNYIPILQVSCDCLEELARELKSKPKPVKGAVKLPDIECTLKCSSQFSDLPQWRKVISEHVFRTMMQSAHLLASQAAFPDVVLPINHRISAILETMKNGDHAHLFRGFQTKLKEHSRFVLDVLARKSVDINDEMQVRAVRFDLNNPDSPIKTFYRQWEKVWKMKERSAVENSKKDDKKKKKEEEAAAAKKRKPNETVEDEDDVKPEVSKAKRKRIKIGAAAKKADASVPDQFADMSMWSDED.

Disordered stretches follow at residues 17–71 (SKRI…HKLD), 85–132 (FLQQ…DKTK), and 638–715 (ERSA…SDED). Acidic residues predominate over residues 89–128 (EDADLLNMEDDGDDDEDDDEDDEDEEEEESDDDEDDEEDD). Residues 638 to 660 (ERSAVENSKKDDKKKKKEEEAAA) show a composition bias toward basic and acidic residues.

Belongs to the NOC2 family.

The protein resides in the nucleus. Required for normal somatic gonad development and for regulation of germline development and proliferation. The sequence is that of Nucleolar complex protein 2 homolog (pro-2) from Caenorhabditis elegans.